Consider the following 144-residue polypeptide: Dynein light chain Tctex-type protein 2B (144 aa).

It belongs to the dynein light chain Tctex-type family. In terms of assembly, light chain of the cytoplasmic dynein complex 2, a multisubunit complex composed at least of eleven different proteins. The cytoplasmic dynein 2 complex consists of two catalytic heavy chains (HCs) and a number of non-catalytic subunits presented by intermediate chains (ICs), light intermediate chains (LICs) and light chains (LCs). Among them, a heavy chain (DYNC2H1), two intermediate chains (DYNC2I2 and DYNC2I1), a light intermediate chain (DYNC2LI1), and a light chain (DYNLT2B) are unique to the dynein-2 complex, but a subset of the light chains are also shared by dynein-1 and dynein-2 complexes. The dimer DYNLT2B-DYNLT1/DYNLT3 interacts with DYNC2I1; this interaction is crucial for retrograde trafficking of ciliary proteins.

It is found in the dynein axonemal particle. Functionally, acts as one of several non-catalytic accessory components of the cytoplasmic dynein 2 complex (dynein-2 complex), a motor protein complex that drives the movement of cargos along microtubules within cilia and flagella in concert with the intraflagellar transport (IFT) system. Required for proper retrograde ciliary transport. The protein is Dynein light chain Tctex-type protein 2B (Dynlt2b) of Mus musculus (Mouse).